Reading from the N-terminus, the 277-residue chain is Small ribosomal subunit protein uS3 (277 aa).

A KH type-2 domain is found at 38 to 106 (IRRLLATGLE…QVQLNILEVK (69 aa)). The interval 217-277 (AGVEAGRGAP…SAPSAETTES (61 aa)) is disordered. A compositionally biased stretch (basic and acidic residues) spans 225–235 (APDRPRRERPA). Residues 242 to 261 (SGSSGTTATSTEAGRAAAET) show a composition bias toward low complexity.

This sequence belongs to the universal ribosomal protein uS3 family. As to quaternary structure, part of the 30S ribosomal subunit. Forms a tight complex with proteins S10 and S14.

Binds the lower part of the 30S subunit head. Binds mRNA in the 70S ribosome, positioning it for translation. This Mycobacteroides abscessus (strain ATCC 19977 / DSM 44196 / CCUG 20993 / CIP 104536 / JCM 13569 / NCTC 13031 / TMC 1543 / L948) (Mycobacterium abscessus) protein is Small ribosomal subunit protein uS3.